We begin with the raw amino-acid sequence, 442 residues long: Protein translocase subunit SecF (442 aa).

Residues 1–39 (MASKAKTGRDDEATSAVELTEATESAVARTDGDSTTDTA) form a disordered region. 6 consecutive transmembrane segments (helical) span residues 67-87 (WFGVSGAIVAVAIASIVFRGF), 187-207 (ITKKAVIALVVFLVLVALYIT), 218-238 (AITAMLFDLTVTAGVYSLVGF), 243-263 (ATVIGLLTILGFSLYDTVIVF), 301-321 (LIGVLPVLALMLVAVWLLGVG), and 331-351 (LIGIIIGTYSSIFFATPLLVT). The segment at 366 to 442 (VLKRRNSGSP…PTGKRNAGRR (77 aa)) is disordered. Residues 402–432 (QASSQSAPRAAQGSSKPAPGARPVRPVGTRR) are compositionally biased toward low complexity. Basic residues predominate over residues 433-442 (PTGKRNAGRR).

Belongs to the SecD/SecF family. SecF subfamily. In terms of assembly, forms a complex with SecD. Part of the essential Sec protein translocation apparatus which comprises SecA, SecYEG and auxiliary proteins SecDF. Other proteins may also be involved.

Its subcellular location is the cell membrane. Functionally, part of the Sec protein translocase complex. Interacts with the SecYEG preprotein conducting channel. SecDF uses the proton motive force (PMF) to complete protein translocation after the ATP-dependent function of SecA. The polypeptide is Protein translocase subunit SecF (Mycobacterium tuberculosis (strain CDC 1551 / Oshkosh)).